Reading from the N-terminus, the 77-residue chain is Putative defensin-like protein 187 (77 aa).

The signal sequence occupies residues 1-19; sequence MKNSSIMFVLIVVFLISSS. 3 disulfide bridges follow: Cys31/Cys77, Cys43/Cys71, and Cys47/Cys73.

It belongs to the DEFL family.

The protein resides in the secreted. In Arabidopsis thaliana (Mouse-ear cress), this protein is Putative defensin-like protein 187 (LCR42).